Here is a 601-residue protein sequence, read N- to C-terminus: Elongation factor 4 (601 aa).

The tr-type G domain occupies 6-188 (KFTRNFSIIA…AICYLLPPPV (183 aa)). GTP is bound by residues 18 to 23 (DHGKST) and 135 to 138 (NKID).

It belongs to the TRAFAC class translation factor GTPase superfamily. Classic translation factor GTPase family. LepA subfamily.

It is found in the cell inner membrane. It catalyses the reaction GTP + H2O = GDP + phosphate + H(+). Its function is as follows. Required for accurate and efficient protein synthesis under certain stress conditions. May act as a fidelity factor of the translation reaction, by catalyzing a one-codon backward translocation of tRNAs on improperly translocated ribosomes. Back-translocation proceeds from a post-translocation (POST) complex to a pre-translocation (PRE) complex, thus giving elongation factor G a second chance to translocate the tRNAs correctly. Binds to ribosomes in a GTP-dependent manner. This Leptospira biflexa serovar Patoc (strain Patoc 1 / Ames) protein is Elongation factor 4.